Consider the following 735-residue polypeptide: Urea active transporter (735 aa).

The Cytoplasmic segment spans residues 1–14 (MGEFKPPLPQGAGY). Residues 15–35 (AIVLGLGAVFAGMMVLTTYLL) traverse the membrane as a helical segment. The Extracellular portion of the chain corresponds to 36-85 (KRYQKEIITAEEFTTAGRSVKTGLVAAAVVSSWIWCSTLLTSSTKEYADG). Residues 86 to 106 (IFGGYAYAAGACFQIIAFAIL) traverse the membrane as a helical segment. Over 107–130 (AIKTKQMAPNAHTYLELVRTRYGK) the chain is Cytoplasmic. Residues 131–151 (IGHGCYLFYAIATNILVTSML) form a helical membrane-spanning segment. Topologically, residues 152-166 (LTSGSAVFSDLTGMN) are extracellular. The helical transmembrane segment at 167-187 (TIASCFLLPVGVVVYTLFGGI) threads the bilayer. Over 188 to 189 (KA) the chain is Cytoplasmic. Residues 190–210 (TFLTDYMHTCVIIIIVLVFAF) traverse the membrane as a helical segment. Residues 211–253 (KVYATSDVLGSPGKVYDLVREAAKRHPVDGNYQGEYMTMTSKS) are Extracellular-facing. Residues 254 to 274 (AGILLIINLIGNFGTVFLDNG) form a helical membrane-spanning segment. Over 275 to 295 (YWNKAISASPAASLKAYAIGG) the chain is Cytoplasmic. A helical transmembrane segment spans residues 296–316 (LAWFAVPSLISLTMGLACLAV). The Extracellular segment spans residues 317–343 (ETSPNFPTYPDPLTSFQANSGLVLPAA). The chain crosses the membrane as a helical span at residues 344–364 (AIAIMGKGGAVASLLMIFMAV). The Cytoplasmic segment spans residues 365-403 (TSAMSAELIAVSSVFTYDIYREYIDPRASGKKLIYTSHV). A helical transmembrane segment spans residues 404 to 424 (ACIFFGLAMSGFSVGLYYGGI). Ser-425 is a topological domain (extracellular). The chain crosses the membrane as a helical span at residues 426–446 (MGYIYEMMGIIISSAVLPVVL). The Cytoplasmic segment spans residues 447 to 454 (TLCSKDMN). A helical membrane pass occupies residues 455 to 475 (LVAAVVSPILGTGLAIMSWLV). Topologically, residues 476 to 496 (CTKSLYKELTVDTTFMDYPML) are extracellular. A helical transmembrane segment spans residues 497-517 (TGNLVALLSPAIFIPILTYVF). At 518–618 (KPQNFDWEKM…EQRELARGLK (101 aa)) the chain is on the cytoplasmic side. The segment at 553–572 (ANDKEQEEETNSLVSDSEKN) is disordered. Residues 619–639 (IAYFLCVFFALAFLVVWPMPM) form a helical membrane-spanning segment. Residues 640–650 (YGSKYIFSKKF) are Extracellular-facing. Residues 651–671 (FTGWVVVMIIWLFFSAFAVCI) traverse the membrane as a helical segment. Over 672 to 735 (YPLWEGRHGI…SHFGQVDEII (64 aa)) the chain is Cytoplasmic.

This sequence belongs to the sodium:solute symporter (SSF) (TC 2.A.21) family. As to quaternary structure, may polymerize.

The protein resides in the membrane. Required for active transport of urea. The chain is Urea active transporter (DUR3) from Saccharomyces cerevisiae (strain ATCC 204508 / S288c) (Baker's yeast).